The sequence spans 206 residues: Putative 3-methyladenine DNA glycosylase (206 aa).

It belongs to the DNA glycosylase MPG family.

The sequence is that of Putative 3-methyladenine DNA glycosylase from Salinibacter ruber (strain DSM 13855 / M31).